The sequence spans 471 residues: Protein translocase subunit SecF (471 aa).

Residues 1 to 29 (MVSRAKVGAETTKGIDEPDRNDNTDDNGA) form a disordered region. A compositionally biased stretch (basic and acidic residues) spans 13–23 (KGIDEPDRNDN). 6 consecutive transmembrane segments (helical) span residues 88-108 (GGVI…TFGI), 211-231 (ITKK…LYIT), 242-262 (ALTT…LVGF), 267-287 (ATVI…VIVF), 325-345 (LISV…LGVG), and 355-375 (LVGI…LLVT). The segment at 393 to 471 (RRTLGSQVGK…TGKRNNVGRR (79 aa)) is disordered. Residues 415–431 (KPQNQAESCADASSQEG) show a composition bias toward polar residues. A compositionally biased stretch (low complexity) spans 448 to 460 (PGVRPVRPTGTRR). The segment covering 461–471 (PTGKRNNVGRR) has biased composition (basic residues).

This sequence belongs to the SecD/SecF family. SecF subfamily. In terms of assembly, forms a complex with SecD. Part of the essential Sec protein translocation apparatus which comprises SecA, SecYEG and auxiliary proteins SecDF. Other proteins may also be involved.

The protein resides in the cell membrane. In terms of biological role, part of the Sec protein translocase complex. Interacts with the SecYEG preprotein conducting channel. SecDF uses the proton motive force (PMF) to complete protein translocation after the ATP-dependent function of SecA. This chain is Protein translocase subunit SecF, found in Mycobacterium leprae (strain TN).